A 304-amino-acid polypeptide reads, in one-letter code: Recombination-associated protein RdgC (304 aa).

This sequence belongs to the RdgC family.

The protein resides in the cytoplasm. Its subcellular location is the nucleoid. Its function is as follows. May be involved in recombination. This is Recombination-associated protein RdgC from Shewanella baltica (strain OS223).